The chain runs to 592 residues: Transmembrane 9 superfamily member 2 (592 aa).

Positions 1–24 (MRTPTTILLLVGAILFSGAGYVRS) are cleaved as a signal peptide. The Lumenal portion of the chain corresponds to 25–229 (DASDHRYKEG…SLPHHLEIHW (205 aa)). Residues 230-250 (FSIINSCVTVLLLTGFLATIL) traverse the membrane as a helical segment. At 251-302 (MRVLKNDFMKYAQDEEAADDQEETGWKYIHGDVFRFPTHNSLFAASLGSGTQ) the chain is on the cytoplasmic side. Residues 303 to 323 (LFTLTIFIFMLALVGVFYPYN) traverse the membrane as a helical segment. Residue Arg324 is a topological domain, lumenal. The chain crosses the membrane as a helical span at residues 325 to 345 (GALFTALVVIYALTSGIAGYT). Over 346–362 (SASFYCQLEGKSWVRNL) the chain is Cytoplasmic. Residues 363 to 383 (LLTGCLFCGPLFLTFCFLNTV) form a helical membrane-spanning segment. The Lumenal portion of the chain corresponds to 384 to 397 (AITYTATAALPFGT). A helical membrane pass occupies residues 398–418 (IVVIVLIWTLVTSPLLVLGGI). Residues 419–452 (AGKNSKAEFQAPCRTTKYPREIPPLPWYRSAIPQ) are Cytoplasmic-facing. A helical transmembrane segment spans residues 453 to 473 (MAMAGFLPFSAIYIELYYIFA). Over 474-485 (SVWGHRIYTIYS) the chain is Lumenal. A helical transmembrane segment spans residues 486–506 (ILFIVFIILIIVTAFITVALT). Topologically, residues 507–521 (YFQLAAEDHQWWWRS) are cytoplasmic. A helical transmembrane segment spans residues 522–542 (FLCGGSTGLFIYAYCLYYYYA). Topologically, residues 543 to 553 (RSDMSGFMQTS) are lumenal. Residues 554–574 (FFFGYMACICYGFFLMLGTVG) traverse the membrane as a helical segment. The Cytoplasmic segment spans residues 575 to 592 (FRAALLFVRHIYRSIKCE). Positions 581–586 (FVRHIY) match the Endoplasmic reticulum export signal motif. The Golgi retention signal motif lies at 590 to 592 (KCE).

The protein belongs to the nonaspanin (TM9SF) (TC 9.A.2) family.

The protein resides in the endosome membrane. The protein localises to the golgi apparatus membrane. This is Transmembrane 9 superfamily member 2 from Arabidopsis thaliana (Mouse-ear cress).